A 111-amino-acid polypeptide reads, in one-letter code: Estrogen receptor (111 aa).

The segment at 1–42 (PSGYAVREAGPPAYYRPNSDNRRQGGRERLASTSDKGSMAVE) is disordered. Positions 1–49 (PSGYAVREAGPPAYYRPNSDNRRQGGRERLASTSDKGSMAVESAKETRY) are modulating. Positions 19–30 (SDNRRQGGRERL) are enriched in basic and acidic residues. S32 carries the phosphoserine modification. 2 NR C4-type zinc fingers span residues 50-70 (CAVCNDYASGYHYGVWSCEGC) and 86-110 (CPATNQCTIDKNRRKSCQACRLRKC). A DNA-binding region (nuclear receptor) is located at residues 50 to 111 (CAVCNDYASG…CQACRLRKCY (62 aa)).

This sequence belongs to the nuclear hormone receptor family. NR3 subfamily. As to quaternary structure, binds DNA as a homodimer. Can form a heterodimer with ESR2. Interacts with coactivator NCOA5. Interacts with PELP1, the interaction is enhanced by 17-beta-estradiol; the interaction increases ESR1 transcriptional activity. Interacts with NCOA7; the interaction is ligand-inducible. Interacts with AKAP13, CUEDC2, HEXIM1, KDM5A, MAP1S, SMARD1, and UBE1C. Interacts with MUC1; the interaction is stimulated by 7 beta-estradiol (E2) and enhances ESR1-mediated transcription. Interacts with DNTTIP2, and UIMC1. Interacts with KMT2D/MLL2. Interacts with ATAD2; the interaction is enhanced by estradiol. Interacts with KIF18A and LDB1. Interacts with RLIM (via its C-terminus). Interacts with MACROD1. Interacts with SH2D4A and PLCG. Interacts with SH2D4A; the interaction blocks binding to PLCG and inhibits estrogen-induced cell proliferation. Interacts with DYNLL1. Interacts with CCDC62; the interaction requires estradiol and appears to enhance the transcription of target genes. Interacts with NR2C1; the interaction prevents homodimerization of ESR1 and suppresses its transcriptional activity and cell growth. Interacts with DNAAF4. Interacts with PRMT2. Interacts with RBFOX2. Interacts with EP300; the interaction is estrogen-dependent and enhanced by CITED1. Interacts with CITED1; the interaction is estrogen-dependent. Interacts with FAM120B, FOXL2, PHB2 and SLC30A9. Interacts with coactivators NCOA3 and NCOA6. Interacts with STK3/MST2 only in the presence of SAV1 and vice-versa. Binds to CSNK1D. Interacts with NCOA2; NCOA2 can interact with ESR1 AF-1 and AF-2 domains simultaneously and mediate their transcriptional synergy. Interacts with DDX5. Interacts with NCOA1; the interaction seems to require a self-association of N-terminal and C-terminal regions. Interacts with ZNF366, DDX17, NFKB1, RELA, SP1 and SP3. Interacts with NRIP1. Interacts with GPER1; the interaction occurs in an estrogen-dependent manner. Interacts with CLOCK and the interaction is stimulated by estrogen. Interacts with TRIP4 (ufmylated); estrogen dependent. Interacts with LMTK3; the interaction phosphorylates ESR1 (in vitro) and protects it against proteasomal degradation. Interacts with CCAR2 (via N-terminus) in a ligand-independent manner. Interacts with ZFHX3. Interacts with SFR1 in a ligand-dependent and -independent manner. Interacts with DCAF13, LATS1 and DCAF1; regulates ESR1 ubiquitination and ubiquitin-mediated proteasomal degradation. Interacts (via DNA-binding domain) with POU4F2 (C-terminus); this interaction increases the estrogen receptor ESR1 transcriptional activity in a DNA- and ligand 17-beta-estradiol-independent manner. Interacts with ESRRB isoform 1. Interacts with UBE3A and WBP2. Interacts with GTF2B. Interacts with RBM39. In the absence of hormonal ligand, interacts with TACC1. Interacts with PI3KR1 or PI3KR2 and PTK2/FAK1. Interacts with SRC. Interacts with BAG1; the interaction is promoted in the absence of estradiol (17-beta-estradiol/E2). Interacts with and ubiquitinated by STUB1; the interaction is promoted in the absence of estradiol (17-beta-estradiol/E2). Interacts with NEDD8. Ubiquitinated; regulated by LATS1 via DCAF1 it leads to ESR1 proteasomal degradation. Deubiquitinated by OTUB1. Ubiquitinated by STUB1/CHIP; in the CA1 hippocampal region following loss of endogenous circulating estradiol (17-beta-estradiol/E2). Ubiquitinated by UBR5, leading to its degradation: UBR5 specifically recognizes and binds ligand-bound ESR1 when it is not associated with coactivators (NCOAs). In presence of NCOAs, the UBR5-degron is not accessible, preventing its ubiquitination and degradation. In terms of processing, dimethylated by PRMT1. Demethylated by JMJD6. Post-translationally, palmitoylated by ZDHHC7 and ZDHHC21. This modification is required for plasma membrane targeting and for rapid intracellular signaling via ERK and AKT kinases and cAMP generation, but not for signaling mediated by the nuclear hormone receptor. Phosphorylated by cyclin A/CDK2 and CK1. Phosphorylation probably enhances transcriptional activity. Dephosphorylation by PPP5C inhibits its transactivation activity. Phosphorylated by LMTK3 (in vitro).

Its subcellular location is the nucleus. It localises to the cytoplasm. The protein resides in the golgi apparatus. It is found in the cell membrane. Nuclear hormone receptor. The steroid hormones and their receptors are involved in the regulation of eukaryotic gene expression and affect cellular proliferation and differentiation in target tissues. Ligand-dependent nuclear transactivation involves either direct homodimer binding to a palindromic estrogen response element (ERE) sequence or association with other DNA-binding transcription factors, such as AP-1/c-Jun, c-Fos, ATF-2, Sp1 and Sp3, to mediate ERE-independent signaling. Ligand binding induces a conformational change allowing subsequent or combinatorial association with multiprotein coactivator complexes through LXXLL motifs of their respective components. Mutual transrepression occurs between the estrogen receptor (ER) and NF-kappa-B in a cell-type specific manner. Decreases NF-kappa-B DNA-binding activity and inhibits NF-kappa-B-mediated transcription from the IL6 promoter and displace RELA/p65 and associated coregulators from the promoter. Recruited to the NF-kappa-B response element of the CCL2 and IL8 promoters and can displace CREBBP. Present with NF-kappa-B components RELA/p65 and NFKB1/p50 on ERE sequences. Can also act synergistically with NF-kappa-B to activate transcription involving respective recruitment adjacent response elements; the function involves CREBBP. Can activate the transcriptional activity of TFF1. Also mediates membrane-initiated estrogen signaling involving various kinase cascades. Essential for MTA1-mediated transcriptional regulation of BRCA1 and BCAS3. Maintains neuronal survival in response to ischemic reperfusion injury when in the presence of circulating estradiol (17-beta-estradiol/E2). The sequence is that of Estrogen receptor (ESR1) from Ovis aries (Sheep).